A 538-amino-acid chain; its full sequence is Probable inorganic phosphate transporter 1-4 (538 aa).

Topologically, residues 1-23 (MAGELKVLNALDSAKTQWYHFTA) are cytoplasmic. A helical transmembrane segment spans residues 24-44 (IVIAGMGFFTDAYDLFSISLV). Over 45–69 (TKLLGRIYYFNPASKSPGSLPPNVS) the chain is Extracellular. The helical transmembrane segment at 70-90 (AAVNGVAFCGTLAGQLFFGWL) threads the bilayer. Residues 91 to 98 (GDKMGRKK) lie on the Cytoplasmic side of the membrane. A helical transmembrane segment spans residues 99 to 119 (VYGMTLMLMVICCLASGLSFG). At 120–123 (SSAK) the chain is on the extracellular side. A helical transmembrane segment spans residues 124-144 (GVMATLCFFRFWLGFGIGGDY). Residues 145–163 (PLSATIMSEYANKRTRGAF) are Cytoplasmic-facing. The helical transmembrane segment at 164 to 184 (IAAVFAMQGFGNLTGGIVAII) threads the bilayer. Topologically, residues 185–210 (VSAAFKARFDAPAYRDDRAGSTVPQA) are extracellular. The chain crosses the membrane as a helical span at residues 211–231 (DYAWRIVLMFGAIPALLTYYW). At 232 to 294 (RMKMPETARY…RQFLRRHGRH (63 aa)) the chain is on the cytoplasmic side. A helical membrane pass occupies residues 295–315 (LLGTTVCWFVLDIAFYSSNLF). Residues 316 to 346 (QKDIYTAVQWLPKADTMSALEEMFKISRAQT) lie on the Extracellular side of the membrane. The helical transmembrane segment at 347 to 367 (LVALCGTIPGYWFTVFFIDII) threads the bilayer. The Cytoplasmic portion of the chain corresponds to 368-369 (GR). The chain crosses the membrane as a helical span at residues 370–390 (FVIQLGGFFFMTAFMLGLAVP). Residues 391–396 (YHHWTT) are Extracellular-facing. A helical membrane pass occupies residues 397–417 (PGNHIGFVVMYAFTFFFANFG). Residues 418–440 (PNSTTFIVPAEIFPARLRSTCHG) lie on the Cytoplasmic side of the membrane. A helical membrane pass occupies residues 441 to 461 (ISAAAGKAGAIVGSFGFLYAA). Residues 462–481 (QSTDASKTDAGYPPGIGVRN) lie on the Extracellular side of the membrane. Residues 482-502 (SLFFLAGCNVIGFFFTFLVPE) form a helical membrane-spanning segment. Residues 503–538 (SKGKSLEELSGENEDDDDVPEAPSTADHRTAPAPPA) are Cytoplasmic-facing. A disordered region spans residues 507 to 538 (SLEELSGENEDDDDVPEAPSTADHRTAPAPPA). Positions 511–522 (LSGENEDDDDVP) are enriched in acidic residues.

The protein belongs to the major facilitator superfamily. Phosphate:H(+) symporter (TC 2.A.1.9) family.

It localises to the membrane. In terms of biological role, high-affinity transporter for external inorganic phosphate. The polypeptide is Probable inorganic phosphate transporter 1-4 (PHT1-4) (Oryza sativa subsp. indica (Rice)).